The following is a 902-amino-acid chain: Protein translocase subunit SecA (902 aa).

Residues Gln-87, 105-109 (GEGKT), and Asp-512 contribute to the ATP site. A disordered region spans residues 851–902 (LARQQQLSHQAPVEELTQGSAAAAQEGRKVGRNDPCPCGSGKKFKHCHGKLQ). Zn(2+) contacts are provided by Cys-886, Cys-888, Cys-897, and His-898. Basic residues predominate over residues 892 to 902 (KKFKHCHGKLQ).

Belongs to the SecA family. As to quaternary structure, monomer and homodimer. Part of the essential Sec protein translocation apparatus which comprises SecA, SecYEG and auxiliary proteins SecDF-YajC and YidC. It depends on Zn(2+) as a cofactor.

The protein localises to the cell inner membrane. It localises to the cytoplasm. The catalysed reaction is ATP + H2O + cellular proteinSide 1 = ADP + phosphate + cellular proteinSide 2.. Its function is as follows. Part of the Sec protein translocase complex. Interacts with the SecYEG preprotein conducting channel. Has a central role in coupling the hydrolysis of ATP to the transfer of proteins into and across the cell membrane, serving both as a receptor for the preprotein-SecB complex and as an ATP-driven molecular motor driving the stepwise translocation of polypeptide chains across the membrane. This Sodalis glossinidius (strain morsitans) protein is Protein translocase subunit SecA.